The primary structure comprises 339 residues: GTPase Obg (339 aa).

Residues 1 to 159 form the Obg domain; it reads MKFVDEAFVR…RELKLELKLL (159 aa). A disordered region spans residues 127–147; the sequence is NTHFKSSTNRAPRRTTSGEEG. The 174-residue stretch at 160–333 folds into the OBG-type G domain; sequence ADVGLLGLPN…LCYDLMSFLE (174 aa). Residues 166-173, 191-195, 213-216, 283-286, and 314-316 contribute to the GTP site; these read GLPNAGKS, FTTLY, DIPG, NKID, and SAI. Residues Ser-173 and Thr-193 each coordinate Mg(2+).

The protein belongs to the TRAFAC class OBG-HflX-like GTPase superfamily. OBG GTPase family. In terms of assembly, monomer. Mg(2+) serves as cofactor.

It is found in the cytoplasm. In terms of biological role, an essential GTPase which binds GTP, GDP and possibly (p)ppGpp with moderate affinity, with high nucleotide exchange rates and a fairly low GTP hydrolysis rate. Plays a role in control of the cell cycle, stress response, ribosome biogenesis and in those bacteria that undergo differentiation, in morphogenesis control. The protein is GTPase Obg of Coxiella burnetii (strain CbuG_Q212) (Coxiella burnetii (strain Q212)).